The chain runs to 350 residues: Tsukushi (350 aa).

Positions 1–17 are cleaved as a signal peptide; sequence MAPSWLFLLFIPGMVGS. Positions 18 to 59 constitute an LRRNT domain; that stretch reads SRSCFPGCQCIVDNFGLFHSFSLTKVDCSGVGPHVVPVSIPL. 10 LRR repeats span residues 60–81, 86–107, 110–131, 133–154, 159–180, 183–203, 204–225, 228–250, 253–275, and 278–299; these read DTSY…VLSG, TLIN…TFSK, YLES…SFLY, RLTE…AFTL, RSMT…AERP, NIHS…LHGI, PLRH…SFLG, GLTH…SFKT, SLLD…MFFG, and SLQE…IMLN. N-linked (GlcNAc...) asparagine glycosylation is found at Asn-75 and Asn-91.

As to quaternary structure, interacts with bmp4. Interacts with dll1 (via extracellular region). Interacts with fgf8; inhibits fgf8 signaling. Interacts with nodal2/Xnr2; enhances nodal2 activity.

It is found in the secreted. Functionally, contributes to various developmental events through its interactions with multiple signaling pathways. Dorsalizing factor which functions as an inhibitor of bone morphogenetic proteins (BMP) during gastrulation. Promotes dll1-dependent activation of Notch signaling and is required for neural crest formation. Induces endoderm and dorsal mesoderm formation by enhancing nodal2/Xnr2 activity while inhibiting ventrolateral mesoderm formation through inhibition of fgf8. In Xenopus tropicalis (Western clawed frog), this protein is Tsukushi (tsku).